Here is a 450-residue protein sequence, read N- to C-terminus: MAQFFKAKPNSSKQLSAKLSLSVNQLDHLGAGIAQHQGKVVFIPGALPDETVTVQLTEQKKNYARAKLIKVDTPSSERVAPECPHYHTCGGCDLQHMSLSGQREHKEAALLDIMAKFAGAEGGTLSPALTGEGWHYRRRARLATLFDKNTKHLSLGFRAASSSNVVPISQCQVLAKPLSDLIVPFAKLLNQLSAKASLGHLELIAADNGHFAVLRITKALNDKDLAKLSAFAEQHQIHICLQDNEGQFQGVGAELVLPVYQLLDDKAESDAVSLSFTPGNFVQVNGQINKAMVAQAMDWLAPAPDERILDLFCGMGNFSLPLAKMGADVIGVEGVAEMVTQARVNAKANNLDKLTFYHGDLSADLSLEPWMGKIDKLLLDPARAGAFESLQWLKKMKPRKVVYVSCNPASLARDSAVLLERGYRLQQLGLIDMFPQTHHIEAMALFELTK.

Residues 12–70 form the TRAM domain; it reads SKQLSAKLSLSVNQLDHLGAGIAQHQGKVVFIPGALPDETVTVQLTEQKKNYARAKLIK. [4Fe-4S] cluster is bound by residues C83, C89, C92, and C171. Positions 283, 312, 317, 333, 360, and 380 each coordinate S-adenosyl-L-methionine. The active-site Nucleophile is the C406.

This sequence belongs to the class I-like SAM-binding methyltransferase superfamily. RNA M5U methyltransferase family. RlmD subfamily.

It catalyses the reaction uridine(1939) in 23S rRNA + S-adenosyl-L-methionine = 5-methyluridine(1939) in 23S rRNA + S-adenosyl-L-homocysteine + H(+). Its function is as follows. Catalyzes the formation of 5-methyl-uridine at position 1939 (m5U1939) in 23S rRNA. The sequence is that of 23S rRNA (uracil(1939)-C(5))-methyltransferase RlmD from Shewanella baltica (strain OS223).